A 193-amino-acid chain; its full sequence is Orotate phosphoribosyltransferase (193 aa).

5-phospho-alpha-D-ribose 1-diphosphate is bound by residues Arg-102, Lys-103, Lys-106, His-108, and Glu-129–Ser-137. Orotate-binding residues include Thr-133 and Arg-161.

Belongs to the purine/pyrimidine phosphoribosyltransferase family. PyrE subfamily. Homodimer. Mg(2+) is required as a cofactor.

The catalysed reaction is orotidine 5'-phosphate + diphosphate = orotate + 5-phospho-alpha-D-ribose 1-diphosphate. The protein operates within pyrimidine metabolism; UMP biosynthesis via de novo pathway; UMP from orotate: step 1/2. Its function is as follows. Catalyzes the transfer of a ribosyl phosphate group from 5-phosphoribose 1-diphosphate to orotate, leading to the formation of orotidine monophosphate (OMP). The protein is Orotate phosphoribosyltransferase of Prochlorococcus marinus (strain NATL1A).